A 442-amino-acid polypeptide reads, in one-letter code: UDP-N-acetylmuramoylalanine--D-glutamate ligase (442 aa).

113-119 (GSNGKTT) serves as a coordination point for ATP.

Belongs to the MurCDEF family.

The protein localises to the cytoplasm. The catalysed reaction is UDP-N-acetyl-alpha-D-muramoyl-L-alanine + D-glutamate + ATP = UDP-N-acetyl-alpha-D-muramoyl-L-alanyl-D-glutamate + ADP + phosphate + H(+). The protein operates within cell wall biogenesis; peptidoglycan biosynthesis. Functionally, cell wall formation. Catalyzes the addition of glutamate to the nucleotide precursor UDP-N-acetylmuramoyl-L-alanine (UMA). The chain is UDP-N-acetylmuramoylalanine--D-glutamate ligase from Coxiella burnetii (strain CbuK_Q154) (Coxiella burnetii (strain Q154)).